We begin with the raw amino-acid sequence, 314 residues long: Putative integrase/recombinase y4rB (314 aa).

The Core-binding (CB) domain occupies 2-79 (STFRQAVQEY…YVRVFARYRA (78 aa)). A Tyr recombinase domain is found at 100-304 (ARPYLYSKED…SPELMKEAMR (205 aa)). Residues arginine 147, lysine 172, histidine 248, arginine 251, and histidine 282 contribute to the active site. Catalysis depends on tyrosine 291, which acts as the O-(3'-phospho-DNA)-tyrosine intermediate.

This sequence belongs to the 'phage' integrase family.

In Sinorhizobium fredii (strain NBRC 101917 / NGR234), this protein is Putative integrase/recombinase y4rB.